Reading from the N-terminus, the 138-residue chain is Nucleoside diphosphate kinase (138 aa).

ATP-binding residues include Lys-12, Tyr-60, Arg-88, Thr-94, Arg-105, and Asn-115. Catalysis depends on His-118, which acts as the Pros-phosphohistidine intermediate.

Belongs to the NDK family. As to quaternary structure, homotetramer. Requires Mg(2+) as cofactor.

The protein localises to the cytoplasm. The catalysed reaction is a 2'-deoxyribonucleoside 5'-diphosphate + ATP = a 2'-deoxyribonucleoside 5'-triphosphate + ADP. The enzyme catalyses a ribonucleoside 5'-diphosphate + ATP = a ribonucleoside 5'-triphosphate + ADP. Its function is as follows. Major role in the synthesis of nucleoside triphosphates other than ATP. The ATP gamma phosphate is transferred to the NDP beta phosphate via a ping-pong mechanism, using a phosphorylated active-site intermediate. This chain is Nucleoside diphosphate kinase, found in Cutibacterium acnes (strain DSM 16379 / KPA171202) (Propionibacterium acnes).